Consider the following 121-residue polypeptide: Large ribosomal subunit protein uL18 (121 aa).

Basic residues predominate over residues methionine 1–alanine 19. A disordered region spans residues methionine 1–glycine 23.

This sequence belongs to the universal ribosomal protein uL18 family. As to quaternary structure, part of the 50S ribosomal subunit; part of the 5S rRNA/L5/L18/L25 subcomplex. Contacts the 5S and 23S rRNAs.

This is one of the proteins that bind and probably mediate the attachment of the 5S RNA into the large ribosomal subunit, where it forms part of the central protuberance. In Syntrophus aciditrophicus (strain SB), this protein is Large ribosomal subunit protein uL18.